A 278-amino-acid polypeptide reads, in one-letter code: Release factor glutamine methyltransferase (278 aa).

S-adenosyl-L-methionine contacts are provided by residues 117 to 121 (GTGSG), Asp140, and Asn184. 184-187 (NPPY) contacts substrate.

Belongs to the protein N5-glutamine methyltransferase family. PrmC subfamily.

The enzyme catalyses L-glutaminyl-[peptide chain release factor] + S-adenosyl-L-methionine = N(5)-methyl-L-glutaminyl-[peptide chain release factor] + S-adenosyl-L-homocysteine + H(+). Its function is as follows. Methylates the class 1 translation termination release factors RF1/PrfA and RF2/PrfB on the glutamine residue of the universally conserved GGQ motif. This Staphylococcus aureus (strain NCTC 8325 / PS 47) protein is Release factor glutamine methyltransferase.